We begin with the raw amino-acid sequence, 138 residues long: Large ribosomal subunit protein uL16 (138 aa).

The protein belongs to the universal ribosomal protein uL16 family. In terms of assembly, part of the 50S ribosomal subunit.

Binds 23S rRNA and is also seen to make contacts with the A and possibly P site tRNAs. In Chlamydia pneumoniae (Chlamydophila pneumoniae), this protein is Large ribosomal subunit protein uL16.